The sequence spans 416 residues: MFSKSVTLAQYDPDLAAAIAQEDRRQQDHVELIASENYVSCAVMEAQGSQLTNKYAEGYPAKRYYGGCEYVDIVEQLAIDRVKELFGAAYANVQPHSGSQANQAVYASVLKPGDTILGMSLAHGGHLTHGASVNISGKLYNAVTYGLDENEVLDYAEVERLALEHKPKMIVAGASAYALQIDWAKFREIADKVGAYLFVDMAHYAGLVAGGEYPNPVPFCDFVTTTTHKTLRGPRGGVILCRDNTHEKALNSSIFPSLQGGPLMHVIAAKAVAFKEALQPEFKQYAKQVKINAAVMAEELVKRGLRIVSGRTESHVFLVDLQPMKITGKAAEAALGKAHITVNKNAIPNDPEKPFVTSGIRIGSAAMTTRGFNETDARVLSNLVADVLANPEDEANLAKVRGQVTALCDKYPVYGN.

Residues Leu-121 and 125 to 127 (GHL) contribute to the (6S)-5,6,7,8-tetrahydrofolate site. Lys-229 carries the post-translational modification N6-(pyridoxal phosphate)lysine.

This sequence belongs to the SHMT family. As to quaternary structure, homodimer. It depends on pyridoxal 5'-phosphate as a cofactor.

The protein resides in the cytoplasm. The enzyme catalyses (6R)-5,10-methylene-5,6,7,8-tetrahydrofolate + glycine + H2O = (6S)-5,6,7,8-tetrahydrofolate + L-serine. The protein operates within one-carbon metabolism; tetrahydrofolate interconversion. Its pathway is amino-acid biosynthesis; glycine biosynthesis; glycine from L-serine: step 1/1. Functionally, catalyzes the reversible interconversion of serine and glycine with tetrahydrofolate (THF) serving as the one-carbon carrier. This reaction serves as the major source of one-carbon groups required for the biosynthesis of purines, thymidylate, methionine, and other important biomolecules. Also exhibits THF-independent aldolase activity toward beta-hydroxyamino acids, producing glycine and aldehydes, via a retro-aldol mechanism. The protein is Serine hydroxymethyltransferase of Neisseria gonorrhoeae (strain NCCP11945).